Reading from the N-terminus, the 177-residue chain is Translation initiation factor IF-3 (177 aa).

It belongs to the IF-3 family. Monomer.

The protein localises to the cytoplasm. Its function is as follows. IF-3 binds to the 30S ribosomal subunit and shifts the equilibrium between 70S ribosomes and their 50S and 30S subunits in favor of the free subunits, thus enhancing the availability of 30S subunits on which protein synthesis initiation begins. This is Translation initiation factor IF-3 from Elusimicrobium minutum (strain Pei191).